The following is a 496-amino-acid chain: MRDEDNNKLILKRKSKLALLREVGNPFINNFKPENLAQNIIQEFKGFSKEELEKKNMQVSIAGRMMLKRVMGKVSFVHVQDSSGKIQLFVTCDKLPESFYNEQFKKWDIGDIIGAIGILFKTNMGELSIRIDDIKLLTKSLRPLPGKFHGLSDQEIRYRQRYVDLIMNKTSRNTFKRRSQIINYIRNFFNHHDFIEVETPMLQTIPGGATAKPFETYHNALDMPMYFRISPELYLKRLIIGGMNKVFEINRNFRNEGLSTRHNPEFTMIEFYQAYGTYHDLMNLTEKLFRSIALDVCGSANVYYQGNNLDFFKSFKRISVVDSILQYNPSLIATDLNQKNAKQTAEKLGIQIKENWGLGKIQIEIFETTVEEKLLQPTFITEYPTEVSPLARRNDDNPFITDRFELFISGCEIANGFSELNDAQDQAERFKKQVEEKDLGNDESMYYDADYIRALEYGMPPTAGEGIGIDRLVMLFTDSPSIRDVILFPHMRAEVK.

Positions 405 and 412 each coordinate Mg(2+).

Belongs to the class-II aminoacyl-tRNA synthetase family. Homodimer. Requires Mg(2+) as cofactor.

It localises to the cytoplasm. It catalyses the reaction tRNA(Lys) + L-lysine + ATP = L-lysyl-tRNA(Lys) + AMP + diphosphate. The chain is Lysine--tRNA ligase from Vesicomyosocius okutanii subsp. Calyptogena okutanii (strain HA).